Reading from the N-terminus, the 103-residue chain is Histone H4, minor (103 aa).

Residues 1–12 are compositionally biased toward gly residues; sequence MAGGKGGKGMGK. Positions 1 to 29 are disordered; the sequence is MAGGKGGKGMGKVGAKRHSRKSNKASIEG. Lysine 5, lysine 8, lysine 12, and lysine 16 each carry N6-acetyllysine. Positions 14 to 23 are enriched in basic residues; sequence GAKRHSRKSN. Residues 16–21 mediate DNA binding; that stretch reads KRHSRK.

This sequence belongs to the histone H4 family. In terms of assembly, the nucleosome is a histone octamer containing two molecules each of H2A, H2B, H3 and H4 assembled in one H3-H4 heterotetramer and two H2A-H2B heterodimers. The octamer wraps approximately 147 bp of DNA.

The protein resides in the nucleus. It localises to the chromosome. Core component of nucleosome. Nucleosomes wrap and compact DNA into chromatin, limiting DNA accessibility to the cellular machineries which require DNA as a template. Histones thereby play a central role in transcription regulation, DNA repair, DNA replication and chromosomal stability. DNA accessibility is regulated via a complex set of post-translational modifications of histones, also called histone code, and nucleosome remodeling. This chain is Histone H4, minor, found in Tetrahymena pyriformis.